The following is an 859-amino-acid chain: Probable helicase A859L (859 aa).

One can recognise a Helicase ATP-binding domain in the interval 178–349 (YQELQRSGRA…KNRELFGGVA (172 aa)). 191–198 (MACRCGKT) contacts ATP. Positions 298–301 (DECH) match the DEAH box motif. In terms of domain architecture, Helicase C-terminal spans 394-553 (QIIMALAYLK…RFYEHLLNPS (160 aa)).

It belongs to the asfivirus helicase A859L family.

This is Probable helicase A859L from African swine fever virus (isolate Pig/Kenya/KEN-50/1950) (ASFV).